Here is a 382-residue protein sequence, read N- to C-terminus: UDP-N-acetylglucosamine--N-acetylmuramyl-(pentapeptide) pyrophosphoryl-undecaprenol N-acetylglucosamine transferase (382 aa).

UDP-N-acetyl-alpha-D-glucosamine contacts are provided by residues Thr11 to Gly13, Asn124, Arg164, Ser192, and Gln314.

Belongs to the glycosyltransferase 28 family. MurG subfamily.

It is found in the cell membrane. The catalysed reaction is di-trans,octa-cis-undecaprenyl diphospho-N-acetyl-alpha-D-muramoyl-L-alanyl-D-glutamyl-meso-2,6-diaminopimeloyl-D-alanyl-D-alanine + UDP-N-acetyl-alpha-D-glucosamine = di-trans,octa-cis-undecaprenyl diphospho-[N-acetyl-alpha-D-glucosaminyl-(1-&gt;4)]-N-acetyl-alpha-D-muramoyl-L-alanyl-D-glutamyl-meso-2,6-diaminopimeloyl-D-alanyl-D-alanine + UDP + H(+). Its pathway is cell wall biogenesis; peptidoglycan biosynthesis. Functionally, cell wall formation. Catalyzes the transfer of a GlcNAc subunit on undecaprenyl-pyrophosphoryl-MurNAc-pentapeptide (lipid intermediate I) to form undecaprenyl-pyrophosphoryl-MurNAc-(pentapeptide)GlcNAc (lipid intermediate II). In Deinococcus deserti (strain DSM 17065 / CIP 109153 / LMG 22923 / VCD115), this protein is UDP-N-acetylglucosamine--N-acetylmuramyl-(pentapeptide) pyrophosphoryl-undecaprenol N-acetylglucosamine transferase.